The following is a 1023-amino-acid chain: uncharacterized protein (1023 aa).

The segment at 1–35 (MAEKRPLGPLGPMMYGKLPRLEPDPGPGHSLPLSA) is disordered. Lys17 is modified (N6-acetyllysine). 2 positions are modified to phosphoserine: Ser206 and Ser383. Disordered stretches follow at residues 381–501 (GASP…PVID), 518–551 (PEPR…ASRS), 703–742 (PAPA…PEQH), 907–980 (EART…TLRA), and 1002–1023 (KASG…THHL). Thr389 carries the post-translational modification Phosphothreonine. Positions 391 to 400 (PSHSQNSVQP) are enriched in polar residues. Basic and acidic residues-rich tracts occupy residues 425 to 436 (RPAEKPTPEAQE), 443 to 454 (CRKEQLQPRPNE), and 477 to 490 (CAKE…KDAR). Phosphoserine is present on residues Ser493 and Ser494. The segment covering 706–722 (ASAPPPSPAPAPAPASG) has biased composition (pro residues). A phosphoserine mark is found at Ser912, Ser964, and Ser972. Low complexity predominate over residues 963 to 972 (PSPSSGASTS).

This is an uncharacterized protein from Mus musculus (Mouse).